Consider the following 385-residue polypeptide: Serpin-Z1 (385 aa).

The tract at residues 317-341 is RCL; sequence GAEAAAATADGDCGCSLDFVEPPKK.

Belongs to the serpin family.

Its function is as follows. Probable serine protease inhibitor. The sequence is that of Serpin-Z1 from Arabidopsis thaliana (Mouse-ear cress).